The chain runs to 380 residues: Erythronate-4-phosphate dehydrogenase (380 aa).

2 residues coordinate substrate: serine 45 and threonine 66. NAD(+) is bound by residues aspartate 146 and threonine 174. Arginine 207 is a catalytic residue. Aspartate 231 serves as a coordination point for NAD(+). Glutamate 236 is a catalytic residue. Histidine 253 serves as the catalytic Proton donor. NAD(+) is bound at residue glycine 256. Position 257 (tyrosine 257) interacts with substrate.

The protein belongs to the D-isomer specific 2-hydroxyacid dehydrogenase family. PdxB subfamily. In terms of assembly, homodimer.

It localises to the cytoplasm. It catalyses the reaction 4-phospho-D-erythronate + NAD(+) = (R)-3-hydroxy-2-oxo-4-phosphooxybutanoate + NADH + H(+). Its pathway is cofactor biosynthesis; pyridoxine 5'-phosphate biosynthesis; pyridoxine 5'-phosphate from D-erythrose 4-phosphate: step 2/5. Its function is as follows. Catalyzes the oxidation of erythronate-4-phosphate to 3-hydroxy-2-oxo-4-phosphonooxybutanoate. The chain is Erythronate-4-phosphate dehydrogenase from Pseudomonas fluorescens (strain ATCC BAA-477 / NRRL B-23932 / Pf-5).